The sequence spans 426 residues: Mothers against decapentaplegic homolog 7 (426 aa).

Residues 14–40 are disordered; that stretch reads WRSRAPGGEDEEEGVGGGGGGGGLRGE. Gly residues predominate over residues 28–39; that stretch reads VGGGGGGGGLRG. N6-acetyllysine; alternate occurs at positions 64 and 70. Residues Lys-64 and Lys-70 each participate in a glycyl lysine isopeptide (Lys-Gly) (interchain with G-Cter in ubiquitin); alternate cross-link. In terms of domain architecture, MH1 spans 64–207; that stretch reads KAVRGAKGHH…LSRLCELESP (144 aa). The segment covering 67 to 76 has biased composition (basic residues); sequence RGAKGHHHPH. Positions 67 to 88 are disordered; it reads RGAKGHHHPHPPSSGAGAAGGA. Residues Cys-125, Cys-180, Cys-192, and His-197 each coordinate Zn(2+). Residues 208–211 carry the PY-motif motif; it reads PPPY. The segment at 208–217 is important for interaction with SMURF2; the sequence is PPPYSRYPMD. The residue at position 249 (Ser-249) is a Phosphoserine. The MH2 domain maps to 261-426; it reads WCVVAYWEEK…CWLEVIFNSR (166 aa).

It belongs to the dwarfin/SMAD family. In terms of assembly, interacts with COPS5. Interacts with STAMBP. Interacts with NEDD4L. Interacts with RNF111, AXIN1 and AXIN2. Interacts with PPP1R15A. Interacts with ACVR1B, SMURF1, SMURF2 and TGFBR1; SMAD7 recruits SMURF1 and SMURF2 to the TGF-beta receptor and regulates its degradation. Interacts with WWP1. Interacts with PDPK1 (via PH domain). Interacts with TSC22D1/TSC-22; the interaction requires TGF-beta and the interaction is inhibited by TGFBR1. Post-translationally, phosphorylation on Ser-249 does not affect its stability, nuclear localization or inhibitory function in TGFB signaling; however it affects its ability to regulate transcription. Phosphorylated by PDPK1. Ubiquitinated by WWP1. Polyubiquitinated by RNF111, which is enhanced by AXIN1 and promotes proteasomal degradation. In response to TGF-beta, ubiquitinated by SMURF1; which promotes its degradation. In terms of processing, acetylation prevents ubiquitination and degradation mediated by SMURF1. Ubiquitous.

It is found in the nucleus. It localises to the cytoplasm. Functionally, antagonist of signaling by TGF-beta (transforming growth factor) type 1 receptor superfamily members; has been shown to inhibit TGF-beta (Transforming growth factor) and activin signaling by associating with their receptors thus preventing SMAD2 access. Functions as an adapter to recruit SMURF2 to the TGF-beta receptor complex. Also acts by recruiting the PPP1R15A-PP1 complex to TGFBR1, which promotes its dephosphorylation. Positively regulates PDPK1 kinase activity by stimulating its dissociation from the 14-3-3 protein YWHAQ which acts as a negative regulator. The chain is Mothers against decapentaplegic homolog 7 (Smad7) from Rattus norvegicus (Rat).